The primary structure comprises 1330 residues: Protein PUTATIVE RECOMBINATION INITIATION DEFECT 1 (1330 aa).

The disordered stretch occupies residues 1310 to 1330; sequence REGRVSPIQEETRQMQTERIV.

Interacts with SPO11-1. According to PubMed:28855712, may interact with SPO11-2; this is in contradiction with PubMed:9461215 which claims that it seems to not interact with SPO11-2. Binds to DFO, PRD3 and MTOPVIB. Facilitates an interaction between PRD3 and DFO. As to expression, expressed in flower buds.

It localises to the nucleus. In terms of biological role, involved in DNA cleavage that forms the double-strand breaks (DSB) that initiate meiotic recombination. In Arabidopsis thaliana (Mouse-ear cress), this protein is Protein PUTATIVE RECOMBINATION INITIATION DEFECT 1.